Reading from the N-terminus, the 161-residue chain is Regulator of ribonuclease activity A (161 aa).

Belongs to the RraA family. Homotrimer. Binds to both RNA-binding sites in the C-terminal region of Rne and to RhlB.

Its subcellular location is the cytoplasm. Functionally, globally modulates RNA abundance by binding to RNase E (Rne) and regulating its endonucleolytic activity. Can modulate Rne action in a substrate-dependent manner by altering the composition of the degradosome. Modulates RNA-binding and helicase activities of the degradosome. This Alteromonas mediterranea (strain DSM 17117 / CIP 110805 / LMG 28347 / Deep ecotype) protein is Regulator of ribonuclease activity A.